Here is a 199-residue protein sequence, read N- to C-terminus: Prolactin-2 (199 aa).

Disulfide bonds link Cys4/Cys11, Cys58/Cys174, and Cys191/Cys199.

Belongs to the somatotropin/prolactin family.

It is found in the secreted. This is Prolactin-2 from Crocodylus novaeguineae (Crocodile).